A 766-amino-acid chain; its full sequence is TBC1 domain family member 30 (766 aa).

Positions 87-295 (GIPKEWRRKV…KIWDSVFFEG (209 aa)) constitute a Rab-GAP TBC domain. Positions 380–406 (PTSVSGRHSKARDSDDENGPDDEDAVA) are disordered. A compositionally biased stretch (acidic residues) spans 393–404 (SDDENGPDDEDA). Residues 422–491 (ELQKYQKQIK…YSRIKKKQQQ (70 aa)) adopt a coiled-coil conformation. Disordered stretches follow at residues 603 to 647 (SSLG…EPVF) and 731 to 766 (NLGL…TKKR). A Phosphoserine modification is found at Ser642. Positions 751–766 (RGFNKSGIGNSSTKKR) are enriched in polar residues.

Its subcellular location is the cell membrane. In terms of biological role, may act as a GTPase-activating protein for Rab family protein(s). The chain is TBC1 domain family member 30 (Tbc1d30) from Mus musculus (Mouse).